The chain runs to 109 residues: FK506-binding protein (109 aa).

Residues 20-108 (GKEITVHYTG…IFEVELLKVY (89 aa)) form the PPIase FKBP-type domain.

The protein belongs to the FKBP-type PPIase family.

The enzyme catalyses [protein]-peptidylproline (omega=180) = [protein]-peptidylproline (omega=0). Functionally, PPIases accelerate the folding of proteins. The polypeptide is FK506-binding protein (fbp) (Neisseria meningitidis serogroup C).